Consider the following 478-residue polypeptide: 3-isopropylmalate dehydratase large subunit (478 aa).

Residues C355, C415, and C418 each coordinate [4Fe-4S] cluster.

The protein belongs to the aconitase/IPM isomerase family. LeuC type 1 subfamily. In terms of assembly, heterodimer of LeuC and LeuD. It depends on [4Fe-4S] cluster as a cofactor.

It carries out the reaction (2R,3S)-3-isopropylmalate = (2S)-2-isopropylmalate. Its pathway is amino-acid biosynthesis; L-leucine biosynthesis; L-leucine from 3-methyl-2-oxobutanoate: step 2/4. Catalyzes the isomerization between 2-isopropylmalate and 3-isopropylmalate, via the formation of 2-isopropylmaleate. This is 3-isopropylmalate dehydratase large subunit from Paracoccus denitrificans (strain Pd 1222).